A 449-amino-acid polypeptide reads, in one-letter code: MELETHLSKYFTLAFTHKSMSLEMREKLAINSNATLKEFLQTIKNHCPNIKECMVLSTCNRFEIYASLKHGANTNEQKNALLKILAQNKKMSVSDLEKCVLMNTDESAVHHVFSVCSSLDSLVVGETQITGQMKNAYKFAFEEKFCSKDLTRLLHFAFKCAAKVRNLTGISKQGVSISSVAVKEALNIFEKERIKDKKALVIGLGEMAQLVIKHLLNKQFEALILGRNAAKFEDFIKELEEPKKVSFQNIENLNAYINEYELLFCATSSPHFIVQNRMLKETIFRRFWFDLAVPRNIEKPVLDNIFLYSVDDLEPMVRENVENRQESRMRAYEIVGLATMEFYQWIQSLEVEPVIKDLRELARISAQKELQKALKKRYVPKEYENNIEKILHNAFNTFLHNPTIALKKNAQKEESDVLVGAIKNLFNLDKSNANHAQNLNLYKCEYYEE.

Substrate contacts are provided by residues 58-61, serine 121, 126-128, and glutamine 132; these read TCNR and ETQ. Cysteine 59 (nucleophile) is an active-site residue. An NADP(+)-binding site is contributed by 203–208; that stretch reads GLGEMA.

It belongs to the glutamyl-tRNA reductase family. Homodimer.

The catalysed reaction is (S)-4-amino-5-oxopentanoate + tRNA(Glu) + NADP(+) = L-glutamyl-tRNA(Glu) + NADPH + H(+). The protein operates within porphyrin-containing compound metabolism; protoporphyrin-IX biosynthesis; 5-aminolevulinate from L-glutamyl-tRNA(Glu): step 1/2. Catalyzes the NADPH-dependent reduction of glutamyl-tRNA(Glu) to glutamate 1-semialdehyde (GSA). This chain is Glutamyl-tRNA reductase, found in Helicobacter pylori (strain ATCC 700392 / 26695) (Campylobacter pylori).